A 338-amino-acid chain; its full sequence is Replication factor C subunit 3 (338 aa).

57–64 (GPPGTGKT) is a binding site for ATP.

This sequence belongs to the activator 1 small subunits family. In terms of assembly, heteropentamer of subunits RFC1, RFC2, RFC3, RFC4 and RFC5 that forms a complex with PCNA in the presence of ATP.

It localises to the nucleus. Functionally, the elongation of primed DNA templates by DNA polymerase delta and epsilon requires the action of the accessory proteins proliferating cell nuclear antigen (PCNA) and activator 1. Subunit 3 binds ATP. This chain is Replication factor C subunit 3 (RFC3), found in Blastobotrys adeninivorans (Yeast).